Here is a 621-residue protein sequence, read N- to C-terminus: F-box/LRR-repeat protein 4 (621 aa).

R28 bears the Asymmetric dimethylarginine mark. An F-box domain is found at 277 to 332; it reads NGYFDKLPYELIQLILNHLTLPDLCRLAQTCKLLSQHCCDPLQYIHLNLQPYWAKL. LRR repeat units lie at residues 376–397, 402–421, 427–448, 452–474, 480–501, 504–524, 532–558, 559–583, and 584–609; these read ELVR…EVIS, NLQA…AFNH, SLKR…SILN, ELQH…ASMI, KLRT…AELA, CPLL…STGC, LPNL…ACNC, TRLQ…LLES, and CKDL…LNAS.

In terms of assembly, part of a SCF (SKP1-CUL1-F-box) protein ligase complex. Interacts with VCP. Interacts with PPTC7; this interaction promotes destruction of BNIP3 and NIX and mitophagy suppression. Expressed in heart, kidney, liver, lung, pancreas, and placenta, but not in skeletal muscle.

It localises to the cytoplasm. It is found in the nucleus. The protein localises to the mitochondrion outer membrane. Substrate-recognition component of the mitochondria-localized SCF-FBXL4 ubiquitin E3 ligase complex that plays a role in the restriction of mitophagy by controlling the degradation of BNIP3 and NIX mitophagy receptors. Rescues also mitochondrial injury through reverting hyperactivation of DRP1-mediated mitochondrial fission. The polypeptide is F-box/LRR-repeat protein 4 (FBXL4) (Homo sapiens (Human)).